Reading from the N-terminus, the 1060-residue chain is MSTIPGFNQIQFEGFCRFIDQGLAEELSKFPKIEDTNQEIDFEFFLERYQLVEPLIKERDAVYESLTYSSELYVSARLIWKNDRRRYIQEQTILIGKIPIMTSLGAFIVNGIYRIVINQILQSPGIYYQSELNDNGISVYTGTIISDWGGRLELEIDRKARIWVRVSRQQKLSILVLLSAMGLNIREILENVCYPELFLSFLNDKKKIGSKENAILEFYQQFACVEGDPVFSESLSKDLQKKFFQQRCELGGIGRRNMNRRLNLDIPQNNTFLLPRDILAAADRLIRIKFGMGTLDDMNHLQNKRIRSVADLLQEQFGLALVRLENMARGNIYAALKHNWTPTPQNLVNSTPLTDTYKVFFRLHPLSQVLDRTNPLTQIVHGRKLSYLGPGGLTARTATFPIRDIHPSHYGRICPIDTSEGINVGLIGSLAIHARIGRWGSLESPFYQISERSKGAQMLYLSPGRDEYYMVAAGNSLALNQGIQEEQVVPARYRQEFLTIAWEQVQLRSIFAFQYFSIGASLIPFIEHNDANRALMSSNMQRQAVPLSQSEKCIVGTGLEGQAALDSGALAIAEHEGKIFYTDTDKILLSGNGDTLRIPLVMYQRSNKNTCMHQKPQVRRGKCIKKGQILAYGAATVGGELALGKNVLVAYMPWEGYNFEDAVLISERLVYEDIYTSFHIRKYEIQINQGPERVTNEIPHLEVHLLRNLDKNGIVMLGSWVETGDILVGKLTPQMVKESSYAPEDRLLRTILGMRVYTSKETCLKLPIGGRGRVIDVRWVQSSKTDETEKTESIRVYILQKREIKVGDKVAGRHGNKGIISKILPRQDMPYLQDGRPVDMVFNPLGVPSRMNVGQIFESSLGLAGDLLDRHYRIAPFDERYEQEASRKLVFSELYEASKQTANPWIFEPESPGKSRIFDGRTGDPFEQPVIIGKPYILKLIHQVDDKIHGRSSGRYSRLTQQPLKGRAKKGGQRVGEMEVWALEGFGVAYILQEMLTYKSDHIRARQEVLGTIIFGGRIPTPEDAPESFRLFVRELRSLALELNHFLVSEKTFQLNRKEA.

This sequence belongs to the RNA polymerase beta chain family. In plastids the minimal PEP RNA polymerase catalytic core is composed of four subunits: alpha, beta, beta', and beta''. When a (nuclear-encoded) sigma factor is associated with the core the holoenzyme is formed, which can initiate transcription.

Its subcellular location is the plastid. The protein resides in the chloroplast. The enzyme catalyses RNA(n) + a ribonucleoside 5'-triphosphate = RNA(n+1) + diphosphate. In terms of biological role, DNA-dependent RNA polymerase catalyzes the transcription of DNA into RNA using the four ribonucleoside triphosphates as substrates. This is DNA-directed RNA polymerase subunit beta from Helianthus annuus (Common sunflower).